We begin with the raw amino-acid sequence, 324 residues long: Meiotic recombination protein DLH1 (324 aa).

112–119 is a binding site for ATP; it reads GEFRCGKT. Arg214 contacts dsDNA. Residues Arg214, Tyr217, Arg220, Arg226, and Arg296 each coordinate ssDNA. Residues Arg220 and Arg226 each coordinate dsDNA.

The protein belongs to the RecA family. DMC1 subfamily. Double stacked ring-shaped homooctamer.

It is found in the nucleus. Required for meiotic recombination, synaptonemal complex formation and cell cycle progression. The polypeptide is Meiotic recombination protein DLH1 (DLH1) (Candida albicans (Yeast)).